We begin with the raw amino-acid sequence, 104 residues long: uncharacterized protein (104 aa).

This is an uncharacterized protein from Mycoplasma pneumoniae (strain ATCC 29342 / M129 / Subtype 1) (Mycoplasmoides pneumoniae).